The sequence spans 829 residues: MFRLRSISLLSWRAFPLRPFSCESLITQMQKCTNEEQVFDLIETNTATLSEQQVGCAFNVLWQFQKQKTVLEKNVDHVRNHPQFLTLCSITTNHIPAMSDATLVDVLYSIKQFAVESHHPLIEALVTEAWKRLERFDTNVLSIFSTCLADQHLYFSPLMGKIADIVNRRLETIQDLRALSVLMVSISSLISPCFQERLVIRTELLFDTVNSSKVNIARRILLFLRNVKYSHYPLLERCNQVFIRNMSHLDLESISKILNLYQFLQFHSFEFVEAARGRLAEMTLPSDHPESFVRLFAALGPVARPEIKKQLKSTILLLSEELSSQQALIVLGAMEDMESRNSHLLKKIVSVLYKHLDNYKSIELLKIIQALTFLHFQSKELFMKLRELLLSRLEASVIPSEISVLVSALSMLPHPHLSETAVSRIEAVLPQCDFRELNDLVVYLMRWIQSDLVCLASTTGKQLDLLQKLDQLGRHRLQQSTNLDLLWEELKSLKGEWLHESLVEESIAALLRFMDEIDYSNIAKVASFLSRTNYLNTLLLDRIASVAIQQVEKIHPFSVLAIILPFSILNYDPPQKDEFFGACVQCCNSYLGTLDPGTLVFLGFSLAVLEYFPEDLLKKMFNIEFLARLDSQLEILPSSLSARIQFRLMELNRAVCLECPELQVPWFHDRFCQRQFNKDTGVMNGAQQQIYKMLAEVLGGHQCVKPSALSPYYHTVGFECILDKRKKPLPYESHSIAPRKSLGMHWDSRVEPRLPPEAERIAIELLDVRAFCSNIPHLKGKSAMKKRHLEILGYRVIQIPYFEWNSMAMSTKDARMDYLREHLFGEGKS.

K346 is modified (N6-acetyllysine). Residues 761–821 form the RAP domain; it reads IAIELLDVRA…KDARMDYLRE (61 aa).

Belongs to the FAST kinase family. In terms of tissue distribution, expression detected in spleen, testis, colon, heart, smooth muscle, kidney, brain, lung, liver, brown and white adipose tissue with highest expression in heart and brown adipose tissue.

It is found in the mitochondrion. Its function is as follows. Involved in the down-regulation of mitochondrial MT-ND3 mRNA levels which leads to decreased respiratory complex I abundance and activity. This Mus musculus (Mouse) protein is FAST kinase domain-containing protein 1, mitochondrial (Fastkd1).